The sequence spans 356 residues: 3-dehydroquinate synthase (356 aa).

NAD(+) is bound by residues 71–76 (EGEASK), 105–109 (GVTGD), 129–130 (TS), lysine 142, and lysine 151. Zn(2+)-binding residues include glutamate 184, histidine 247, and histidine 264.

It belongs to the sugar phosphate cyclases superfamily. Dehydroquinate synthase family. It depends on Co(2+) as a cofactor. Zn(2+) serves as cofactor. NAD(+) is required as a cofactor.

It localises to the cytoplasm. It catalyses the reaction 7-phospho-2-dehydro-3-deoxy-D-arabino-heptonate = 3-dehydroquinate + phosphate. Its pathway is metabolic intermediate biosynthesis; chorismate biosynthesis; chorismate from D-erythrose 4-phosphate and phosphoenolpyruvate: step 2/7. Catalyzes the conversion of 3-deoxy-D-arabino-heptulosonate 7-phosphate (DAHP) to dehydroquinate (DHQ). The protein is 3-dehydroquinate synthase of Lactococcus lactis subsp. cremoris (strain MG1363).